The following is a 696-amino-acid chain: Transcriptional regulatory protein pro1 (696 aa).

Residues 1–48 (MSTQSPNHHEDITKTSSVNMTTTTTTTKTKAAAKAGTNAAPKQKTQMH) form a disordered region. The segment covering 21–40 (TTTTTTTKTKAAAKAGTNAA) has biased composition (low complexity). Positions 55-82 (CYTCRLRRKKCDEGSPMCTACKHLGLCC) form a DNA-binding region, zn(2)-C6 fungal-type. Residues 112–145 (LSEKSSHTIQTSINTPPGLSHSLPTSATFSDPLD) form a disordered region. Over residues 118-140 (HTIQTSINTPPGLSHSLPTSATF) the composition is skewed to polar residues.

The protein localises to the nucleus. In terms of biological role, may be involved in fruiting body development. The sequence is that of Transcriptional regulatory protein pro1 (adv-1) from Neurospora crassa (strain ATCC 24698 / 74-OR23-1A / CBS 708.71 / DSM 1257 / FGSC 987).